The sequence spans 900 residues: MPGPSDDPTEIALQGNLFSDAEPTVSATGVEPSTACEAFSDMELTADAASRPRRRAPADHNAADHDSNTDESSDNSDDPAWAHHSQVDPQQLTPMLRHYVELKAAHPERVLLYRLGDFFECFFEDAITLSRLLELTLTGKEGGKAVGRVPMAGIPHHAAERYCGELIRRGFSVALCDQLETTPAKGALLKRDITRVLTPGTVLEEGMLSSRRNNWLAAVVIEPAHRDEPFRWGLASADVSTGEVQVMQRQDSDALHQQLAQLGAAELLSSTPESNPAWCPDQLRLTSVASTPFSRPAAEAALLRHYKLANLDGLGLPELPLALRAMGGLLAYLRDTQPLEENASVPLEVPAIVQRGDALVLDAQTRRNLELTATQRDGSLQGSLLWAIDRTLTAMGGRCLRRWLEAPLMDLDAIRQRQQLVSTLVEQRNLRQALRRLLRPMGDLERLAGRAGAGHAGARDLVAIADGLERLPQLAARLEGTIIRGPDWLDDLLQPDPALQDLASSIRHTLLESPPLSLSEGGLIHDGVDPLLDGLRNQLDDQDAWLSQQEKQERQRSGNSNLRLQYHRTFGYFLAVSKAKASAVPDHWIRRQTLANEERFITPALKEREGRIFQLRARACQREYELFCTLREQVGALAASIRRAARAVAGLDALTGLADTAASGAYCAPELVEGRALSLSEARHPVVEQLLVETRFTANDVHLGSGTDLVVLTGPNASGKSCYLRQIGLIQLLAQIGSWVPAAKARIGIADRIFTRVGAVDDLAAGQSTFMVEMAETANILHHATELSLVLLDEIGRGTATFDGLSIAWAVSEHLAGDLRARTVFATHYHELNNLANERANVANFQVLVEETGDDLLFLHRVSQGGASRSYGIEAARLAGVPTPVVQRARQVLDQIEAAA.

Residues 1–88 (MPGPSDDPTE…PAWAHHSQVD (88 aa)) are disordered. Positions 56-68 (APADHNAADHDSN) are enriched in basic and acidic residues. Residue 714 to 721 (GPNASGKS) coordinates ATP.

It belongs to the DNA mismatch repair MutS family.

In terms of biological role, this protein is involved in the repair of mismatches in DNA. It is possible that it carries out the mismatch recognition step. This protein has a weak ATPase activity. This Parasynechococcus marenigrum (strain WH8102) protein is DNA mismatch repair protein MutS.